A 29-amino-acid chain; its full sequence is uncharacterized protein (29 aa).

This is an uncharacterized protein from Saccharomyces cerevisiae (strain ATCC 204508 / S288c) (Baker's yeast).